Here is a 692-residue protein sequence, read N- to C-terminus: Elongation factor G (692 aa).

A tr-type G domain is found at 8 to 282 (ENTRNIGIMA…AVLDYLPSPL (275 aa)). Residues 17–24 (AHIDAGKT), 81–85 (DTPGH), and 135–138 (NKMD) contribute to the GTP site.

The protein belongs to the TRAFAC class translation factor GTPase superfamily. Classic translation factor GTPase family. EF-G/EF-2 subfamily.

The protein resides in the cytoplasm. Catalyzes the GTP-dependent ribosomal translocation step during translation elongation. During this step, the ribosome changes from the pre-translocational (PRE) to the post-translocational (POST) state as the newly formed A-site-bound peptidyl-tRNA and P-site-bound deacylated tRNA move to the P and E sites, respectively. Catalyzes the coordinated movement of the two tRNA molecules, the mRNA and conformational changes in the ribosome. The polypeptide is Elongation factor G (fusA) (Halalkalibacterium halodurans (strain ATCC BAA-125 / DSM 18197 / FERM 7344 / JCM 9153 / C-125) (Bacillus halodurans)).